Reading from the N-terminus, the 73-residue chain is Adipokinetic prohormone type 2 (73 aa).

Residues 1–20 (MCRIFIVLLVVAALAIIIEG) form the signal peptide. Residue glutamine 21 is modified to Pyrrolidone carboxylic acid. Residue asparagine 30 is modified to Asparagine amide. The propeptide occupies 34–73 (SISSEQINDDCNPEEAIFQIYKLIVSEGERIRACQRDGKM).

As to expression, expressed in corpora cardiaca (CC), corpora allata (CA) and gnathal ganglion (GNG) (at protein level). Expression in CC and CA detected in all animals, expression in GNG detected in few animals (at protein level). Not expressed in antennal lobe (AL) (at protein level).

The protein localises to the secreted. In terms of biological role, this hormone, released from cells in the corpora cardiaca, causes release of diglycerides from the fat body and stimulation of muscles to use these diglycerides as an energy source during energy-demanding processes. This Agrotis ipsilon (Black cutworm moth) protein is Adipokinetic prohormone type 2.